Here is a 604-residue protein sequence, read N- to C-terminus: Serine/threonine-protein kinase A-Raf (604 aa).

The RBD domain maps to 19–91 (GTVKVYLPNK…DGEELIVEVL (73 aa)). The Phorbol-ester/DAG-type zinc-finger motif lies at 98-144 (MHNFVRKTFFSLAFCDFCLKFLFHGFRCQTCGYKFHQHCSSKVPTVC). Zn(2+)-binding residues include His-99, Cys-112, Cys-115, Cys-125, Cys-128, His-133, Cys-136, and Cys-144. Phosphoserine is present on residues Ser-157 and Ser-162. Disordered stretches follow at residues 178 to 222 (ELLT…HMVS) and 241 to 287 (TDAA…DEKK). Thr-181 carries the post-translational modification Phosphothreonine. Ser-186 is modified (phosphoserine). Residues 210-222 (IRSTSTPNVHMVS) are compositionally biased toward polar residues. The span at 252 to 265 (PRGSPSPASVSSGR) shows a compositional bias: low complexity. Phosphoserine occurs at positions 255 and 267. Residues 272-287 (LPAEQRERKSLADEKK) are compositionally biased toward basic and acidic residues. The Protein kinase domain maps to 308–568 (VQLLKRIGTG…PQILATIELL (261 aa)). ATP contacts are provided by residues 314–322 (IGTGSFGTV) and Lys-334. Thr-316 carries the post-translational modification Phosphothreonine. Asp-427 (proton acceptor) is an active-site residue.

The protein belongs to the protein kinase superfamily. TKL Ser/Thr protein kinase family. RAF subfamily. Interacts with TH1L/NELFD. It depends on Zn(2+) as a cofactor. Dephosphorylation by the SHOC2-MRAS-PP1c (SMP) complex consisting of SHOC2, GTP-bound M-Ras/MRAS and the catalytic subunit of protein phosphatase 1 (PPP1CA, PPP1CB or PPP1CC); this relieves inactivation and stimulates kinase activity.

It catalyses the reaction L-seryl-[protein] + ATP = O-phospho-L-seryl-[protein] + ADP + H(+). The catalysed reaction is L-threonyl-[protein] + ATP = O-phospho-L-threonyl-[protein] + ADP + H(+). In terms of biological role, involved in the transduction of mitogenic signals from the cell membrane to the nucleus. May also regulate the TOR signaling cascade. Phosphorylates PFKFB2. This chain is Serine/threonine-protein kinase A-Raf (Araf), found in Rattus norvegicus (Rat).